Consider the following 543-residue polypeptide: Myotubularin-related protein 9-like (543 aa).

The 379-residue stretch at 124 to 502 (AWHFHPPECY…QSLRLWQGLF (379 aa)) folds into the Myotubularin phosphatase domain.

The protein belongs to the protein-tyrosine phosphatase family. Non-receptor class myotubularin subfamily.

Functionally, probable pseudophosphatase. This chain is Myotubularin-related protein 9-like, found in Bos taurus (Bovine).